A 142-amino-acid chain; its full sequence is Large ribosomal subunit protein uL11 (142 aa).

It belongs to the universal ribosomal protein uL11 family. In terms of assembly, part of the ribosomal stalk of the 50S ribosomal subunit. Interacts with L10 and the large rRNA to form the base of the stalk. L10 forms an elongated spine to which L12 dimers bind in a sequential fashion forming a multimeric L10(L12)X complex. In terms of processing, one or more lysine residues are methylated.

Forms part of the ribosomal stalk which helps the ribosome interact with GTP-bound translation factors. This Akkermansia muciniphila (strain ATCC BAA-835 / DSM 22959 / JCM 33894 / BCRC 81048 / CCUG 64013 / CIP 107961 / Muc) protein is Large ribosomal subunit protein uL11.